The sequence spans 95 residues: Small ribosomal subunit protein bS6 (95 aa).

The protein belongs to the bacterial ribosomal protein bS6 family.

Its function is as follows. Binds together with bS18 to 16S ribosomal RNA. In Clostridium perfringens (strain ATCC 13124 / DSM 756 / JCM 1290 / NCIMB 6125 / NCTC 8237 / Type A), this protein is Small ribosomal subunit protein bS6.